The primary structure comprises 38 residues: Large ribosomal subunit protein bL36 (38 aa).

It belongs to the bacterial ribosomal protein bL36 family.

The protein is Large ribosomal subunit protein bL36 of Karelsulcia muelleri (strain GWSS) (Sulcia muelleri).